A 275-amino-acid polypeptide reads, in one-letter code: 3-methyl-2-oxobutanoate hydroxymethyltransferase (275 aa).

Positions 44 and 83 each coordinate Mg(2+). Residues 44–45 (DS), aspartate 83, and lysine 113 each bind 3-methyl-2-oxobutanoate. A Mg(2+)-binding site is contributed by glutamate 115. The active-site Proton acceptor is the glutamate 182.

The protein belongs to the PanB family. In terms of assembly, homodecamer; pentamer of dimers. Mg(2+) serves as cofactor.

It localises to the cytoplasm. The enzyme catalyses 3-methyl-2-oxobutanoate + (6R)-5,10-methylene-5,6,7,8-tetrahydrofolate + H2O = 2-dehydropantoate + (6S)-5,6,7,8-tetrahydrofolate. The protein operates within cofactor biosynthesis; (R)-pantothenate biosynthesis; (R)-pantoate from 3-methyl-2-oxobutanoate: step 1/2. Functionally, catalyzes the reversible reaction in which hydroxymethyl group from 5,10-methylenetetrahydrofolate is transferred onto alpha-ketoisovalerate to form ketopantoate. This is 3-methyl-2-oxobutanoate hydroxymethyltransferase from Clostridium botulinum (strain 657 / Type Ba4).